The following is a 122-amino-acid chain: Large ribosomal subunit protein uL14c (122 aa).

It belongs to the universal ribosomal protein uL14 family. In terms of assembly, part of the 50S ribosomal subunit.

It is found in the plastid. Binds to 23S rRNA. The polypeptide is Large ribosomal subunit protein uL14c (Cuscuta reflexa (Southern Asian dodder)).